Consider the following 364-residue polypeptide: PHD finger protein 6 (364 aa).

S2 is subject to N-acetylserine. 2 consecutive short sequence motifs (nuclear localization signal) follow at residues 13-16 (RQRK) and 129-133 (RKHKK). The C2HC pre-PHD-type 1 zinc-finger motif lies at 14 to 52 (QRKCGFCKSNRDKECGQLLISENQKVAAHHKCMLFSSAL). Residues 14-132 (QRKCGFCKSN…IYMVYCRKHK (119 aa)) form an extended PHD1 domain (ePHD1) region. Residues 80-132 (LMCSLCHCPGATIGCDVKTCHRTYHYHCALHDKAQIREKPSQGIYMVYCRKHK) form a PHD-type 1 zinc finger. A phosphoserine mark is found at S138, S145, and S155. A disordered region spans residues 139–211 (EADLEESFNE…RSSPNDTRPK (73 aa)). A Nucleolar localization signal motif is present at residues 157-169 (KTKKKSRKGRPRK). Basic residues predominate over residues 157–171 (KTKKKSRKGRPRKTN). Residue K173 forms a Glycyl lysine isopeptide (Lys-Gly) (interchain with G-Cter in SUMO2) linkage. A phosphoserine mark is found at S183 and S199. Residues 209 to 249 (RPKCGFCHVGEEENEARGKLHIFNAKKAAAHYKCMLFSSGT) form a C2HC pre-PHD-type 2 zinc finger. The interval 209–330 (RPKCGFCHVG…IYKLYCKNHS (122 aa)) is extended PHD2 domain (ePHD2). A Glycyl lysine isopeptide (Lys-Gly) (interchain with G-Cter in SUMO2) cross-link involves residue K227. The segment at 278–330 (MKCTLCSQPGATIGCEIKACVKTYHYHCGVQDKAKYIENMSRGIYKLYCKNHS) adopts a PHD-type 2 zinc-finger fold. The segment at 330 to 364 (SGNDERDEEDEERESKSRGRVAIDQQLTQQQLNGN) is disordered. The segment covering 354–364 (QQLTQQQLNGN) has biased composition (polar residues). T357 carries the phosphothreonine modification.

In terms of assembly, interacts with UBTF. Interacts with the NuRD complex component RBBP4 (via the nucleolar localization motif), the interaction mediates transcriptional repression activity. At 12.5 dpc it is highly expressed in the embryonic central nervous system and at lower levels in other tissues. Very low levels present throughout the adult brain.

It localises to the nucleus. The protein localises to the nucleolus. The protein resides in the chromosome. It is found in the centromere. Its subcellular location is the kinetochore. In terms of biological role, transcriptional regulator that associates with ribosomal RNA promoters and suppresses ribosomal RNA (rRNA) transcription. This is PHD finger protein 6 (Phf6) from Mus musculus (Mouse).